Reading from the N-terminus, the 299-residue chain is Sugar transporter SWEET1 (299 aa).

The region spanning 7 to 91 (QVLSISAITT…CVFFLIYSLP (85 aa)) is the MtN3/slv 1 domain. 7 consecutive transmembrane segments (helical) span residues 8-28 (VLSI…IPIC), 36-56 (AVGD…SFWL), 67-87 (MIIV…FFLI), 95-115 (FTCQ…WIAL), 124-144 (VICM…LGVV), 155-175 (LPMC…GNLV), and 180-200 (IIIP…LFVV). One can recognise a MtN3/slv 2 domain in the interval 121–205 (YLGVICMTFN…ALFVVLPIRE (85 aa)). The segment at 230–299 (RGDCIVSSPP…DPDLSSIQSP (70 aa)) is disordered. Residues 247 to 261 (NETRSDVEDKFDKLM) are compositionally biased toward basic and acidic residues. Residues 276 to 299 (SMGSPPSYKSRSSSDPDLSSIQSP) show a composition bias toward low complexity.

The protein belongs to the SWEET sugar transporter family.

Its subcellular location is the golgi apparatus membrane. It is found in the cell membrane. In terms of biological role, mediates both low-affinity uptake and efflux of sugar across the membrane. The protein is Sugar transporter SWEET1 (swt-1) of Caenorhabditis elegans.